The following is a 133-amino-acid chain: Acyl-CoA thioester hydrolase YciA (133 aa).

In terms of domain architecture, HotDog ACOT-type spans 8–123 (PQGELVLRTL…LFIYVAVDPD (116 aa)).

This sequence belongs to the acyl coenzyme A hydrolase family.

Functionally, catalyzes the hydrolysis of the thioester bond in palmitoyl-CoA and malonyl-CoA. This chain is Acyl-CoA thioester hydrolase YciA (yciA), found in Salmonella typhi.